The chain runs to 149 residues: Angiogenin (149 aa).

Residues 1–24 (MVMGLGPLVLIFVLGLGVTPPTLA) form the signal peptide. The residue at position 25 (glutamine 25) is a Pyrrolidone carboxylic acid. Histidine 37 acts as the Proton acceptor in catalysis. Arginine 45 serves as a coordination point for tRNA. Cystine bridges form between cysteine 50-cysteine 105, cysteine 63-cysteine 116, and cysteine 81-cysteine 131. A Nucleolar localization signal motif is present at residues 55–59 (KRRDL). Cysteine 105 and isoleucine 127 together coordinate tRNA. Catalysis depends on histidine 138, which acts as the Proton donor.

Belongs to the pancreatic ribonuclease family. As to quaternary structure, homodimer. Interacts with RNH1; inhibiting ANG ribonuclease activity. Interacts with PCNA.

The protein resides in the secreted. It localises to the nucleus. It is found in the nucleolus. The protein localises to the cytoplasm. Its subcellular location is the stress granule. Its activity is regulated as follows. Has weak tRNA ribonuclease activity by itself due to partial autoinhibition by its C-terminus, which folds into a short alpha-helix that partially occludes the substrate-binding site. In absence of stress, the ribonuclease activity is inhibited by RNH1 in the cytoplasm. In response to stress, dissociates from RNH1 in the cytoplasm and associates with cytoplasmic ribosomes with vacant A-sites: ribosomes directly activate the tRNA ribonuclease activity of ANG by refolding the C-terminal alpha-helix. In response to stress, the angiogenic activity of ANG is inhibited by RNH1 in the nucleus. Functionally, secreted ribonuclease that can either promote or restrict cell proliferation of target cells, depending on the context. Endocytosed in target cells via its receptor PLXNB2 and translocates to the cytoplasm or nucleus. Under stress conditions, localizes to the cytoplasm and promotes the assembly of stress granules (SGs): specifically cleaves a subset of tRNAs within anticodon loops to produce tRNA-derived stress-induced fragments (tiRNAs), resulting in translation repression and inhibition of cell proliferation. tiRNas also prevent formation of apoptosome, thereby promoting cell survival. Preferentially cleaves RNAs between a pyrimidine and an adenosine residue, suggesting that it cleaves the anticodon loop of tRNA(Ala) (32-UUAGCAU-38) after positions 33 and 36. Cleaves a subset of tRNAs, including tRNA(Ala), tRNA(Glu), tRNA(Gly), tRNA(Lys), tRNA(Val), tRNA(His), tRNA(Asp) and tRNA(Sec). Under growth conditions and in differentiated cells, translocates to the nucleus and stimulates ribosomal RNA (rRNA) transcription, including that containing the initiation site sequences of 45S rRNA, thereby promoting cell growth and proliferation. Angiogenin induces vascularization of normal and malignant tissues via its ability to promote rRNA transcription. Involved in hematopoietic stem and progenitor cell (HSPC) growth and survival by promoting rRNA transcription in growth conditions and inhibiting translation in response to stress, respectively. Mediates the crosstalk between myeloid and intestinal epithelial cells to protect the intestinal epithelial barrier integrity: secreted by myeloid cells and promotes intestinal epithelial cells proliferation and survival. Also mediates osteoclast-endothelial cell crosstalk in growing bone: produced by osteoclasts and protects the neighboring vascular cells against senescence by promoting rRNA transcription. This chain is Angiogenin (ANG), found in Oryctolagus cuniculus (Rabbit).